Consider the following 459-residue polypeptide: Bifunctional protein GlmU (459 aa).

The pyrophosphorylase stretch occupies residues 1–229 (MSNYAIILAA…FDESLGVNDR (229 aa)). Residues 8-11 (LAAG), Lys22, Gln72, and 77-78 (GT) each bind UDP-N-acetyl-alpha-D-glucosamine. Asp102 is a Mg(2+) binding site. UDP-N-acetyl-alpha-D-glucosamine-binding residues include Gly139, Glu154, Asn169, and Asn227. Asn227 lines the Mg(2+) pocket. The segment at 230-250 (VALATAEKVMRHRIARQHMVN) is linker. The tract at residues 251 to 459 (GVTVVNPDSA…NKKPHHPSQK (209 aa)) is N-acetyltransferase. Residues Arg332 and Lys350 each contribute to the UDP-N-acetyl-alpha-D-glucosamine site. Residue His362 is the Proton acceptor of the active site. 2 residues coordinate UDP-N-acetyl-alpha-D-glucosamine: Tyr365 and Asn376. Acetyl-CoA contacts are provided by residues Ala379, 385–386 (NY), Ser404, Ala422, and Arg439.

This sequence in the N-terminal section; belongs to the N-acetylglucosamine-1-phosphate uridyltransferase family. The protein in the C-terminal section; belongs to the transferase hexapeptide repeat family. In terms of assembly, homotrimer. It depends on Mg(2+) as a cofactor.

The protein localises to the cytoplasm. The enzyme catalyses alpha-D-glucosamine 1-phosphate + acetyl-CoA = N-acetyl-alpha-D-glucosamine 1-phosphate + CoA + H(+). The catalysed reaction is N-acetyl-alpha-D-glucosamine 1-phosphate + UTP + H(+) = UDP-N-acetyl-alpha-D-glucosamine + diphosphate. The protein operates within nucleotide-sugar biosynthesis; UDP-N-acetyl-alpha-D-glucosamine biosynthesis; N-acetyl-alpha-D-glucosamine 1-phosphate from alpha-D-glucosamine 6-phosphate (route II): step 2/2. It functions in the pathway nucleotide-sugar biosynthesis; UDP-N-acetyl-alpha-D-glucosamine biosynthesis; UDP-N-acetyl-alpha-D-glucosamine from N-acetyl-alpha-D-glucosamine 1-phosphate: step 1/1. Its pathway is bacterial outer membrane biogenesis; LPS lipid A biosynthesis. Its function is as follows. Catalyzes the last two sequential reactions in the de novo biosynthetic pathway for UDP-N-acetylglucosamine (UDP-GlcNAc). The C-terminal domain catalyzes the transfer of acetyl group from acetyl coenzyme A to glucosamine-1-phosphate (GlcN-1-P) to produce N-acetylglucosamine-1-phosphate (GlcNAc-1-P), which is converted into UDP-GlcNAc by the transfer of uridine 5-monophosphate (from uridine 5-triphosphate), a reaction catalyzed by the N-terminal domain. The sequence is that of Bifunctional protein GlmU from Streptococcus agalactiae serotype V (strain ATCC BAA-611 / 2603 V/R).